Reading from the N-terminus, the 633-residue chain is Phosphomethylpyrimidine synthase (633 aa).

Substrate-binding positions include Asn-245, Met-274, Tyr-303, His-339, 359–361 (SRG), 400–403 (DGLR), and Glu-439. Zn(2+) is bound at residue His-443. Residue Tyr-466 coordinates substrate. A Zn(2+)-binding site is contributed by His-507. The [4Fe-4S] cluster site is built by Cys-587, Cys-590, and Cys-595.

It belongs to the ThiC family. Homodimer. The cofactor is [4Fe-4S] cluster.

The enzyme catalyses 5-amino-1-(5-phospho-beta-D-ribosyl)imidazole + S-adenosyl-L-methionine = 4-amino-2-methyl-5-(phosphooxymethyl)pyrimidine + CO + 5'-deoxyadenosine + formate + L-methionine + 3 H(+). The protein operates within cofactor biosynthesis; thiamine diphosphate biosynthesis. Functionally, catalyzes the synthesis of the hydroxymethylpyrimidine phosphate (HMP-P) moiety of thiamine from aminoimidazole ribotide (AIR) in a radical S-adenosyl-L-methionine (SAM)-dependent reaction. This Neisseria meningitidis serogroup A / serotype 4A (strain DSM 15465 / Z2491) protein is Phosphomethylpyrimidine synthase.